Reading from the N-terminus, the 448-residue chain is Divalent metal cation transporter MntH (448 aa).

A run of 11 helical transmembrane segments spans residues 41 to 61 (LFAFMGPGALIAVGYVDPGNW), 69 to 89 (SEFGYTLLSVILISNILAVLL), 117 to 137 (GFVLWILAELAIIATDIAEVI), 147 to 167 (FGIPLIWGVCITALDIFLVLF), 176 to 196 (IEVIVITLMVTILVCFGAEMV), 215 to 235 (IVTNPAMLYIALGILGATVMP), 270 to 290 (FSLTIALLINASILILAAAAF), 307 to 327 (LLNPTLGSSIASTVFAVALLA), 363 to 383 (VLAIVPAVIITALYGANGINE), 384 to 404 (LLIFSQVILSMQLSFAVIPLV), and 424 to 444 (IISWAVAIFIAILNIYLLFYT).

It belongs to the NRAMP family.

The protein localises to the cell membrane. In terms of biological role, h(+)-stimulated, divalent metal cation uptake system. This is Divalent metal cation transporter MntH from Listeria welshimeri serovar 6b (strain ATCC 35897 / DSM 20650 / CCUG 15529 / CIP 8149 / NCTC 11857 / SLCC 5334 / V8).